A 32-amino-acid chain; its full sequence is U6-ctenitoxin-Pr1a (32 aa).

3 disulfide bridges follow: Cys3-Cys17, Cys10-Cys21, and Cys16-Cys30.

Expressed by the venom gland.

The protein localises to the secreted. This is U6-ctenitoxin-Pr1a from Phoneutria reidyi (Brazilian Amazonian armed spider).